Reading from the N-terminus, the 304-residue chain is ATP synthase gamma chain (304 aa).

This sequence belongs to the ATPase gamma chain family. As to quaternary structure, F-type ATPases have 2 components, CF(1) - the catalytic core - and CF(0) - the membrane proton channel. CF(1) has five subunits: alpha(3), beta(3), gamma(1), delta(1), epsilon(1). CF(0) has three main subunits: a, b and c.

The protein resides in the cell membrane. Produces ATP from ADP in the presence of a proton gradient across the membrane. The gamma chain is believed to be important in regulating ATPase activity and the flow of protons through the CF(0) complex. The protein is ATP synthase gamma chain of Mycobacterium marinum (strain ATCC BAA-535 / M).